Reading from the N-terminus, the 198-residue chain is Superoxide dismutase [Mn], mitochondrial (198 aa).

His26 contributes to the Mn(2+) binding site. Tyr34 bears the 3'-nitrotyrosine mark. N6-acetyllysine; alternate occurs at positions 44 and 51. 2 positions are modified to N6-succinyllysine; alternate: Lys44 and Lys51. Residue His74 participates in Mn(2+) binding. Lys90 carries the N6-acetyllysine modification. An N6-acetyllysine; alternate mark is found at Lys98 and Lys106. Lys98 and Lys106 each carry N6-succinyllysine; alternate. Residues Asp159 and His163 each contribute to the Mn(2+) site. Lys178 is subject to N6-acetyllysine.

Belongs to the iron/manganese superoxide dismutase family. In terms of assembly, homotetramer. The cofactor is Mn(2+). Post-translationally, nitrated under oxidative stress. Nitration coupled with oxidation inhibits the catalytic activity. Acetylation at Lys-98 decreases enzymatic activity. Deacetylated by SIRT3 upon exposure to ionizing radiations or after long fasting. In terms of processing, polyubiquitinated; leading to proteasomal degradation. Deubiquitinated by USP36 which increases protein stability.

It localises to the mitochondrion matrix. It carries out the reaction 2 superoxide + 2 H(+) = H2O2 + O2. In terms of biological role, destroys superoxide anion radicals which are normally produced within the cells and which are toxic to biological systems. The chain is Superoxide dismutase [Mn], mitochondrial (SOD2) from Pan troglodytes (Chimpanzee).